The primary structure comprises 842 residues: DNA mismatch repair protein MutS (842 aa).

Residue 596–603 (GPNMSGKS) participates in ATP binding.

The protein belongs to the DNA mismatch repair MutS family.

Functionally, this protein is involved in the repair of mismatches in DNA. It is possible that it carries out the mismatch recognition step. This protein has a weak ATPase activity. This is DNA mismatch repair protein MutS from Exiguobacterium sp. (strain ATCC BAA-1283 / AT1b).